The chain runs to 291 residues: m-AAA protease-interacting protein 1, mitochondrial (291 aa).

Residues 1-96 (MALAARLLPL…SLPASPSRSY (96 aa)) constitute a mitochondrion transit peptide.

Interacts with AFG3L2. Interacts with SPG7. Interacts with SMDT1/EMRE (via the N-terminal transit peptide); interaction is direct and takes place before maturation of SMDT1/EMRE.

The protein resides in the mitochondrion matrix. Its function is as follows. Promotes sorting of SMDT1/EMRE in mitochondria by ensuring its maturation. Interacts with the transit peptide region of SMDT1/EMRE precursor protein in the mitochondrial matrix, leading to protect it against protein degradation by YME1L1, thereby ensuring SMDT1/EMRE maturation by the mitochondrial processing peptidase (PMPCA and PMPCB). The sequence is that of m-AAA protease-interacting protein 1, mitochondrial from Mus musculus (Mouse).